Consider the following 341-residue polypeptide: Uroporphyrinogen decarboxylase (341 aa).

Residues 25–29 (RQAGR), Phe-44, Asp-74, Tyr-151, Ser-206, and His-318 each bind substrate.

This sequence belongs to the uroporphyrinogen decarboxylase family. In terms of assembly, homodimer.

The protein resides in the cytoplasm. The catalysed reaction is uroporphyrinogen III + 4 H(+) = coproporphyrinogen III + 4 CO2. Its pathway is porphyrin-containing compound metabolism; protoporphyrin-IX biosynthesis; coproporphyrinogen-III from 5-aminolevulinate: step 4/4. In terms of biological role, catalyzes the decarboxylation of four acetate groups of uroporphyrinogen-III to yield coproporphyrinogen-III. This chain is Uroporphyrinogen decarboxylase, found in Flavobacterium johnsoniae (strain ATCC 17061 / DSM 2064 / JCM 8514 / BCRC 14874 / CCUG 350202 / NBRC 14942 / NCIMB 11054 / UW101) (Cytophaga johnsonae).